Here is a 308-residue protein sequence, read N- to C-terminus: Glutaminase (308 aa).

Positions 66, 117, 161, 168, 192, 244, and 262 each coordinate substrate.

Belongs to the glutaminase family. In terms of assembly, homotetramer.

It carries out the reaction L-glutamine + H2O = L-glutamate + NH4(+). This is Glutaminase from Salmonella heidelberg (strain SL476).